A 666-amino-acid polypeptide reads, in one-letter code: Endogenous retrovirus group K member 7 Gag polyprotein (666 aa).

Residue Gly-2 is the site of N-myristoyl glycine attachment. 2 disordered regions span residues 165–205 and 217–264; these read GKGP…NKTQ and ELQY…GSEL. Positions 232 to 247 are enriched in pro residues; that stretch reads GMPPAPQGRAPYPQPP. 2 CCHC-type zinc fingers span residues 544 to 561 and 580 to 597; these read GKCYNCGQIGHLKKNCPV and DLCPRCKKGKHWASQCRS. The disordered stretch occupies residues 598-641; the sequence is KFDKNGQPLSGNEQRGQPQAPQQTGAFPIQPFVPQGFQEQQPPL. The segment covering 604–622 has biased composition (polar residues); that stretch reads QPLSGNEQRGQPQAPQQTG.

Belongs to the beta type-B retroviral Gag protein family. HERV class-II K(HML-2) gag subfamily. In terms of processing, specific enzymatic cleavages may yield mature proteins. Myristoylation is essential for retroviral assembly. Alteration of the glycine residue leads to a block in the budding of particles and an accumulation of Gag inside the cell.

It is found in the cell membrane. Its function is as follows. The products of the Gag polyproteins of infectious retroviruses perform highly complex orchestrated tasks during the assembly, budding, maturation, and infection stages of the viral replication cycle. During viral assembly, the proteins form membrane associations and self-associations that ultimately result in budding of an immature virion from the infected cell. Gag precursors also function during viral assembly to selectively bind and package two plus strands of genomic RNA. Endogenous Gag proteins may have kept, lost or modified their original function during evolution. The sequence is that of Endogenous retrovirus group K member 7 Gag polyprotein (ERVK-7) from Homo sapiens (Human).